The chain runs to 126 residues: Fluoride-specific ion channel FluC (126 aa).

A run of 4 helical transmembrane segments spans residues 4–24, 38–58, 71–91, and 104–124; these read FAIL…RYLV, YGTL…IAAF, IIGL…MDNV, and LNVV…FQLL. Residues G78 and T81 each contribute to the Na(+) site.

Belongs to the fluoride channel Fluc/FEX (TC 1.A.43) family.

The protein resides in the cell inner membrane. The enzyme catalyses fluoride(in) = fluoride(out). With respect to regulation, na(+) is not transported, but it plays an essential structural role and its presence is essential for fluoride channel function. Its function is as follows. Fluoride-specific ion channel. Important for reducing fluoride concentration in the cell, thus reducing its toxicity. This chain is Fluoride-specific ion channel FluC, found in Vibrio vulnificus (strain CMCP6).